We begin with the raw amino-acid sequence, 603 residues long: Sorting nexin-41 (603 aa).

A disordered region spans residues 1–36; the sequence is MNSFRESDEEDNNPFSGTNHLYASGIGAVPEGDDDF. The PX domain occupies 121 to 241; it reads AEGSLGALRI…QKFLNPEYIW (121 aa). Arg-159, Ser-161, Lys-185, and Arg-208 together coordinate a 1,2-diacyl-sn-glycero-3-phospho-(1D-myo-inositol-3-phosphate).

This sequence belongs to the sorting nexin family.

It is found in the endosome membrane. Its subcellular location is the endomembrane system. Its function is as follows. May be required for cytoplasm to vacuole transport (Cvt) and pexophagy. This chain is Sorting nexin-41 (SNX41), found in Eremothecium gossypii (strain ATCC 10895 / CBS 109.51 / FGSC 9923 / NRRL Y-1056) (Yeast).